The chain runs to 475 residues: Gamma-aminobutyric acid receptor subunit gamma-2 (475 aa).

Residues 1-39 form the signal peptide; the sequence is MSSPNIWSTGSSVYSTPVFSQKMTLWILLLLSLYPGLTR. The Extracellular portion of the chain corresponds to 41-275; the sequence is KSDDDYEDYA…FDLSRRMGYF (235 aa). 2 N-linked (GlcNAc...) asparagine glycosylation sites follow: Asn52 and Asn129. Cysteines 190 and 204 form a disulfide. Asn247 is a glycosylation site (N-linked (GlcNAc...) asparagine). Residues 276–296 form a helical membrane-spanning segment; that stretch reads TIQTYIPCTLIVVLSWVSFWI. Over 297 to 302 the chain is Cytoplasmic; sequence NKDAVP. The helical transmembrane segment at 303–322 threads the bilayer; the sequence is ARTSLGITTVLTMTTLSTIA. The Extracellular segment spans residues 323 to 334; that stretch reads RKSLPKVSYVTA. The chain crosses the membrane as a helical span at residues 335 to 359; the sequence is MDLFVSVCFIFVFSALVEYGTLHYF. Topologically, residues 360 to 451 are cytoplasmic; that stretch reads VSNRKPSKDK…IHIRIAKMDS (92 aa). Ser382 is subject to Phosphoserine; by PKC. A helical membrane pass occupies residues 452–472; that stretch reads YARIFFPTAFCLFNLVYWVSY. Topologically, residues 473–475 are extracellular; it reads LYL.

This sequence belongs to the ligand-gated ion channel (TC 1.A.9) family. Gamma-aminobutyric acid receptor (TC 1.A.9.5) subfamily. GABRG2 sub-subfamily. In terms of assembly, heteropentamer, formed by a combination of alpha (GABRA1-6), beta (GABRB1-3), gamma (GABRG1-3), delta (GABRD), epsilon (GABRE), rho (GABRR1-3), pi (GABRP) and theta (GABRQ) chains, each subunit exhibiting distinct physiological and pharmacological properties. Interacts with GABARAP. Interacts with KIF21B. Identified in a complex of 720 kDa composed of LHFPL4, NLGN2, GABRA1, GABRB2, GABRG2 and GABRB3. Interacts with LHFPL4. Interacts with SHISA7; interaction leads to the regulation of GABA(A) receptor trafficking, channel deactivation kinetics and pharmacology. Post-translationally, palmitoylated by ZDHHC3/GODZ; required for the accumulation of GABA(A) receptors at the postsynaptic membrane of inhibitory GABAergic synapses. Glycosylated.

It is found in the postsynaptic cell membrane. The protein resides in the cell membrane. It localises to the cell projection. Its subcellular location is the dendrite. The protein localises to the cytoplasmic vesicle membrane. It catalyses the reaction chloride(in) = chloride(out). Its activity is regulated as follows. Allosterically activated by benzodiazepines. Activated by pentobarbital. Inhibited by the antagonist bicuculline. Inhibited by zinc ions. Potentiated by histamine. Its function is as follows. Gamma subunit of the heteropentameric ligand-gated chloride channel gated by gamma-aminobutyric acid (GABA), a major inhibitory neurotransmitter in the brain. GABA-gated chloride channels, also named GABA(A) receptors (GABAAR), consist of five subunits arranged around a central pore and contain GABA active binding site(s) located at the alpha and beta subunit interface(s). When activated by GABA, GABAARs selectively allow the flow of chloride anions across the cell membrane down their electrochemical gradient. Gamma-2/GABRG2-containing GABAARs are found at both synaptic and extrasynaptic sites. Chloride influx into the postsynaptic neuron following GABAAR opening decreases the neuron ability to generate a new action potential, thereby reducing nerve transmission. GABAARs containing alpha-1 and beta-2 or -3 subunits exhibit synaptogenic activity; the gamma-2 subunit being necessary but not sufficient to induce rapid synaptic contacts formation. Extrasynaptic gamma-2-containing receptors contribute to the tonic GABAergic inhibition. GABAARs function also as histamine receptor where histamine binds at the interface of two neighboring beta subunits and potentiates GABA response in a gamma-2 subunit-controlled manner. This Bos taurus (Bovine) protein is Gamma-aminobutyric acid receptor subunit gamma-2 (GABRG2).